The following is a 354-amino-acid chain: Uroporphyrinogen decarboxylase (354 aa).

Residues 30-34, phenylalanine 49, aspartate 79, tyrosine 156, serine 211, and histidine 326 contribute to the substrate site; that span reads RQAGR.

This sequence belongs to the uroporphyrinogen decarboxylase family. As to quaternary structure, homodimer.

It is found in the cytoplasm. It carries out the reaction uroporphyrinogen III + 4 H(+) = coproporphyrinogen III + 4 CO2. The protein operates within porphyrin-containing compound metabolism; protoporphyrin-IX biosynthesis; coproporphyrinogen-III from 5-aminolevulinate: step 4/4. Its function is as follows. Catalyzes the decarboxylation of four acetate groups of uroporphyrinogen-III to yield coproporphyrinogen-III. The protein is Uroporphyrinogen decarboxylase of Salinibacter ruber (strain DSM 13855 / M31).